The primary structure comprises 576 residues: Non-neuronal cytoplasmic intermediate filament protein (576 aa).

Positions 1-51 (MTSKISTTYEEEGRQSKIQPRAFVITRSGPSSKSSSFSARQSYASSRQSIT) are disordered. Residues 2-75 (TSKISTTYEE…FRGTREKEKR (74 aa)) form a head region. Residues 28-49 (SGPSSKSSSFSARQSYASSRQS) are compositionally biased toward low complexity. An IF rod domain is found at 73–425 (EKREMQNLNE…KLLEGEESRV (353 aa)). Positions 76–108 (EMQNLNERLASYIEKVHFLDAQVKKLEAENEAL) are coil 1A. A linker 1 region spans residues 109–122 (RNRKSESLQPIRDA). Positions 123–260 (YENELAQARK…DLLDQLELLK (138 aa)) are coil 1B. The tract at residues 261-278 (PEPIQIKGMDYAEFWKSE) is linker 2. The segment at 279–425 (LSKCVREIQS…KLLEGEESRV (147 aa)) is coil 2. The tail stretch occupies residues 426 to 576 (GLRSLVEQAI…KATLIAKFSG (151 aa)). Residues 456 to 574 (GSMTIQRSSK…NEKATLIAKF (119 aa)) form the LTD domain.

Belongs to the intermediate filament family. In terms of assembly, can form homopolymers.

The protein resides in the cytoplasm. The sequence is that of Non-neuronal cytoplasmic intermediate filament protein from Cornu aspersum (Brown garden snail).